A 109-amino-acid chain; its full sequence is UPF0122 protein CLL_A1244 (109 aa).

It belongs to the UPF0122 family.

Its function is as follows. Might take part in the signal recognition particle (SRP) pathway. This is inferred from the conservation of its genetic proximity to ftsY/ffh. May be a regulatory protein. The protein is UPF0122 protein CLL_A1244 of Clostridium botulinum (strain Eklund 17B / Type B).